A 232-amino-acid chain; its full sequence is Peroxisomal protein PEX21 (232 aa).

Cys-5 participates in a covalent cross-link: Glycyl cysteine thioester (Cys-Gly) (interchain with G-Cter in ubiquitin).

This sequence belongs to the peroxin-21 family. Interacts with PEX7. Post-translationally, monoubiquitinated at Cys-5; acts as a signal for PEX21 extraction and is required for proper export from peroxisomes and recycling.

It localises to the cytoplasm. Its subcellular location is the cytosol. The protein resides in the peroxisome. Its function is as follows. Mediates peroxisomal import of proteins containing a C-terminal PTS2-type peroxisomal targeting signal via its interaction with PEX7. Interaction with PEX7 only takes place when PEX7 is associated with cargo proteins containing a PTS2 peroxisomal targeting signal. PEX7 along with PTS2-containing cargo proteins are then translocated through the PEX13-PEX14 docking complex together with PEX21. This Candida glabrata (strain ATCC 2001 / BCRC 20586 / JCM 3761 / NBRC 0622 / NRRL Y-65 / CBS 138) (Yeast) protein is Peroxisomal protein PEX21 (PEX21).